Here is a 215-residue protein sequence, read N- to C-terminus: Vesicle-trafficking protein SEC22b-A (215 aa).

Residues 1–190 (MVLQTMIVRV…RSDAKYLNTR (190 aa)) are Cytoplasmic-facing. The Longin domain maps to 6-119 (MIVRVADSLP…YSFIEFDTYI (114 aa)). Positions 134–194 (NLGNINSELH…KYLNTRSTYA (61 aa)) constitute a v-SNARE coiled-coil homology domain. Residues 191 to 213 (STYAKVAAGAVIIITLIIYVRFW) form a helical membrane-spanning segment. The Lumenal segment spans residues 214-215 (WL).

This sequence belongs to the synaptobrevin family. Component of 2 distinct SNARE complexes.

The protein localises to the endoplasmic reticulum membrane. It is found in the endoplasmic reticulum-Golgi intermediate compartment membrane. It localises to the golgi apparatus. Its subcellular location is the cis-Golgi network membrane. The protein resides in the trans-Golgi network membrane. The protein localises to the melanosome. In terms of biological role, SNARE involved in targeting and fusion of ER-derived transport vesicles with the Golgi complex as well as Golgi-derived retrograde transport vesicles with the ER. This is Vesicle-trafficking protein SEC22b-A from Danio rerio (Zebrafish).